A 794-amino-acid polypeptide reads, in one-letter code: Zinc finger protein 148 (794 aa).

A Glycyl lysine isopeptide (Lys-Gly) (interchain with G-Cter in SUMO2) cross-link involves residue K6. S51 is subject to Phosphoserine. Residues K88, K115, and K132 each participate in a glycyl lysine isopeptide (Lys-Gly) (interchain with G-Cter in SUMO2) cross-link. The segment at 171 to 193 (HVCEHCNAAFRTNYHLQRHVFIH) adopts a C2H2-type 1 zinc-finger fold. Position 194 is a phosphothreonine (T194). 2 consecutive C2H2-type zinc fingers follow at residues 199 to 221 (FQCS…EKIH) and 227 to 249 (FRCD…KRTH). S250 carries the phosphoserine modification. Residues 255–278 (YQCEYCLQYFSRTDRVLKHKRMCH) form a C2H2-type 4 zinc finger. Residue K291 forms a Glycyl lysine isopeptide (Lys-Gly) (interchain with G-Cter in SUMO2) linkage. The interval 298 to 338 (EEDSGFSTSPKDNSLPKKKRQKTEKKSSGMDKESSLDKSDL) is disordered. 2 positions are modified to phosphoserine: S301 and S306. K308 participates in a covalent cross-link: Glycyl lysine isopeptide (Lys-Gly) (interchain with G-Cter in SUMO2). Residues 321-338 (EKKSSGMDKESSLDKSDL) are compositionally biased toward basic and acidic residues. Residue K356 forms a Glycyl lysine isopeptide (Lys-Gly) (interchain with G-Cter in SUMO1); alternate linkage. A Glycyl lysine isopeptide (Lys-Gly) (interchain with G-Cter in SUMO2); alternate cross-link involves residue K356. K402 is covalently cross-linked (Glycyl lysine isopeptide (Lys-Gly) (interchain with G-Cter in SUMO2)). Residue S412 is modified to Phosphoserine. Residues K421 and K424 each participate in a glycyl lysine isopeptide (Lys-Gly) (interchain with G-Cter in SUMO2) cross-link. Residues 575–588 (SSEVPEVTQSENVG) show a composition bias toward polar residues. The disordered stretch occupies residues 575-596 (SSEVPEVTQSENVGSSSQASSS). An N6-acetyllysine modification is found at K607. Residues S665 and S784 each carry the phosphoserine modification. Residues 775–794 (NDNRAGMTSSPDATTGQTFG) are disordered.

This sequence belongs to the krueppel C2H2-type zinc-finger protein family. Interacts with HNRNPDL. Interacts with the 5FMC complex; the interaction requires association with CHTOP. Interacts with CAVIN1. Sumoylated with SUMO2. Desumoylated by SENP3, resulting in the stimulation of transcription of its target genes.

The protein resides in the nucleus. Functionally, involved in transcriptional regulation. Represses the transcription of a number of genes including gastrin, stromelysin and enolase. Binds to the G-rich box in the enhancer region of these genes. The polypeptide is Zinc finger protein 148 (ZNF148) (Bos taurus (Bovine)).